The primary structure comprises 887 residues: Beta-galactosidase 14 (887 aa).

A signal peptide spans 1–31 (MSKSSRIRMKSRTRYLIAILLVISLCSKASS). The active-site Proton donor is the Glu197. Glu268 (nucleophile) is an active-site residue. N-linked (GlcNAc...) asparagine glycosylation is found at Asn269, Asn300, Asn395, and Asn785. One can recognise an SUEL-type lectin domain in the interval 752–838 (KDMRLKAVMR…KTLAVQVKCE (87 aa)). A compositionally biased stretch (basic and acidic residues) spans 838-852 (EKKEGKQDEKKKKED). A disordered region spans residues 838-887 (EKKEGKQDEKKKKEDKDEEEEDDEDDDEEEEEEDKENKDTKDMENKNQDM). Over residues 853–871 (KDEEEEDDEDDDEEEEEED) the composition is skewed to acidic residues. Residues 872 to 887 (KENKDTKDMENKNQDM) are compositionally biased toward basic and acidic residues.

The protein belongs to the glycosyl hydrolase 35 family.

Its subcellular location is the secreted. It localises to the extracellular space. It is found in the apoplast. It catalyses the reaction Hydrolysis of terminal non-reducing beta-D-galactose residues in beta-D-galactosides.. The sequence is that of Beta-galactosidase 14 (BGAL14) from Arabidopsis thaliana (Mouse-ear cress).